The primary structure comprises 66 residues: Small vasohibin-binding protein (66 aa).

Positions Met1–Lys23 are enriched in basic and acidic residues. The segment at Met1 to Lys32 is disordered. Positions Ala5–Gln52 form a coiled coil.

This sequence belongs to the SVBP family. In terms of assembly, interacts with VASH1 and VASH2.

It localises to the cytoplasm. The protein localises to the secreted. Its subcellular location is the cytoskeleton. In terms of biological role, enhances the tyrosine carboxypeptidase activity of VASH1 and VASH2, thereby promoting the removal of the C-terminal tyrosine residue of alpha-tubulin. Also required to enhance the solubility and secretion of VASH1 and VASH2. Plays a role in axon and excitatory synapse formation. The chain is Small vasohibin-binding protein from Bos taurus (Bovine).